Here is a 348-residue protein sequence, read N- to C-terminus: Probable dual-specificity RNA methyltransferase RlmN (348 aa).

Residue E92 is the Proton acceptor of the active site. The Radical SAM core domain occupies 98-331; it reads HPDRVTACIS…NEIRREKGTD (234 aa). Residues C105 and C336 are joined by a disulfide bond. C112, C116, and C119 together coordinate [4Fe-4S] cluster. S-adenosyl-L-methionine-binding positions include 159 to 160, S191, 214 to 216, and N290; these read GE and SLH. The active-site S-methylcysteine intermediate is the C336.

Belongs to the radical SAM superfamily. RlmN family. It depends on [4Fe-4S] cluster as a cofactor.

It is found in the cytoplasm. The enzyme catalyses adenosine(2503) in 23S rRNA + 2 reduced [2Fe-2S]-[ferredoxin] + 2 S-adenosyl-L-methionine = 2-methyladenosine(2503) in 23S rRNA + 5'-deoxyadenosine + L-methionine + 2 oxidized [2Fe-2S]-[ferredoxin] + S-adenosyl-L-homocysteine. It carries out the reaction adenosine(37) in tRNA + 2 reduced [2Fe-2S]-[ferredoxin] + 2 S-adenosyl-L-methionine = 2-methyladenosine(37) in tRNA + 5'-deoxyadenosine + L-methionine + 2 oxidized [2Fe-2S]-[ferredoxin] + S-adenosyl-L-homocysteine. Functionally, specifically methylates position 2 of adenine 2503 in 23S rRNA and position 2 of adenine 37 in tRNAs. This is Probable dual-specificity RNA methyltransferase RlmN from Fervidobacterium nodosum (strain ATCC 35602 / DSM 5306 / Rt17-B1).